The sequence spans 381 residues: Neuropeptide Y receptor type 2 (381 aa).

The tract at residues Met1–Pro37 is disordered. The Extracellular segment spans residues Met1–Val52. Asn11 carries N-linked (GlcNAc...) asparagine glycosylation. Residues Val53–Ile73 form a helical membrane-spanning segment. The Cytoplasmic portion of the chain corresponds to His74–Asn87. Residues Phe88–Thr108 form a helical membrane-spanning segment. Over Leu109–His125 the chain is Extracellular. Cys124 and Cys204 form a disulfide bridge. The chain crosses the membrane as a helical span at residues Leu126–Ala146. The Cytoplasmic portion of the chain corresponds to Leu147–Ser166. Residues Phe167–Phe187 traverse the membrane as a helical segment. At Arg188–Gly217 the chain is on the extracellular side. Residues Thr218–Val238 traverse the membrane as a helical segment. Residues Ser239 to Lys269 are Cytoplasmic-facing. Residues Met270 to Leu290 form a helical membrane-spanning segment. The Extracellular segment spans residues Ala291 to Lys305. A helical membrane pass occupies residues Leu306–Tyr326. At Gly327 to Val381 the chain is on the cytoplasmic side. A lipid anchor (S-palmitoyl cysteine) is attached at Cys343.

This sequence belongs to the G-protein coupled receptor 1 family.

The protein localises to the cell membrane. In terms of biological role, receptor for neuropeptide Y and peptide YY. In Cavia porcellus (Guinea pig), this protein is Neuropeptide Y receptor type 2 (NPY2R).